The primary structure comprises 217 residues: Cyclin-P2-1 (217 aa).

This sequence belongs to the cyclin family. Cyclin U/P subfamily.

The protein is Cyclin-P2-1 (CYCP2-1) of Oryza sativa subsp. japonica (Rice).